A 307-amino-acid chain; its full sequence is Ribosomal RNA small subunit methyltransferase H (307 aa).

S-adenosyl-L-methionine-binding positions include 34–36 (GGH), Asp-54, Phe-79, Asp-101, and Gln-108.

This sequence belongs to the methyltransferase superfamily. RsmH family.

The protein resides in the cytoplasm. The catalysed reaction is cytidine(1402) in 16S rRNA + S-adenosyl-L-methionine = N(4)-methylcytidine(1402) in 16S rRNA + S-adenosyl-L-homocysteine + H(+). Its function is as follows. Specifically methylates the N4 position of cytidine in position 1402 (C1402) of 16S rRNA. The sequence is that of Ribosomal RNA small subunit methyltransferase H from Vesicomyosocius okutanii subsp. Calyptogena okutanii (strain HA).